We begin with the raw amino-acid sequence, 528 residues long: Protein spinster homolog 1 (528 aa).

Residues M1–E38 form a disordered region. At A2 the chain carries N-acetylalanine. Helical transmembrane passes span L60–A80, G98–L118, Y126–P146, V160–V180, M187–S207, W218–V238, L278–L298, L323–I343, L357–A377, I381–I401, F421–I441, and M465–I485. Phosphoserine is present on S518.

This sequence belongs to the major facilitator superfamily. Spinster (TC 2.A.1.49) family. As to quaternary structure, interacts with BCL2 and BCL2L1.

The protein resides in the lysosome membrane. It carries out the reaction a 1-acyl-sn-glycero-3-phosphocholine(out) + H(+)(out) = a 1-acyl-sn-glycero-3-phosphocholine(in) + H(+)(in). The enzyme catalyses 1-hexadecanoyl-sn-glycero-3-phosphocholine(out) + H(+)(out) = 1-hexadecanoyl-sn-glycero-3-phosphocholine(in) + H(+)(in). The catalysed reaction is 1-(9Z-octadecenoyl)-sn-glycero-3-phosphocholine(out) + H(+)(out) = 1-(9Z-octadecenoyl)-sn-glycero-3-phosphocholine(in) + H(+)(in). It catalyses the reaction 1-(5Z,8Z,11Z,14Z-eicosatetraenoyl)-sn-glycero-3-phosphocholine(out) + H(+)(out) = 1-(5Z,8Z,11Z,14Z-eicosatetraenoyl)-sn-glycero-3-phosphocholine(in) + H(+)(in). It carries out the reaction 1-(4Z,7Z,10Z,13Z,16Z,19Z-docosahexaenoyl)-sn-glycero-3-phosphocholine(out) + H(+)(out) = 1-(4Z,7Z,10Z,13Z,16Z,19Z-docosahexaenoyl)-sn-glycero-3-phosphocholine(in) + H(+)(in). The enzyme catalyses a 1-acyl-sn-glycero-3-phosphoethanolamine(out) + H(+)(out) = a 1-acyl-sn-glycero-3-phosphoethanolamine(in) + H(+)(in). The catalysed reaction is 1-(9Z-octadecenoyl)-sn-glycero-3-phosphoethanolamine(out) + H(+)(out) = 1-(9Z-octadecenoyl)-sn-glycero-3-phosphoethanolamine(in) + H(+)(in). It catalyses the reaction 1-acyl-sn-glycero-3-phospho-(1'-sn-glycerol)(out) + H(+)(out) = 1-acyl-sn-glycero-3-phospho-(1'-sn-glycerol)(in) + H(+)(in). It carries out the reaction 1-(9Z-octadecenoyl)-sn-glycero-3-phospho-(1'-sn-glycerol)(out) + H(+)(out) = 1-(9Z-octadecenoyl)-sn-glycero-3-phospho-(1'-sn-glycerol)(in) + H(+)(in). The enzyme catalyses a 1-O-(1Z-alkenyl)-sn-glycero-3-phosphocholine(out) + H(+)(out) = a 1-O-(1Z-alkenyl)-sn-glycero-3-phosphocholine(in) + H(+)(in). The catalysed reaction is 1-(1Z-hexadecenyl)-sn-glycero-3-phosphocholine(out) + H(+)(out) = 1-(1Z-hexadecenyl)-sn-glycero-3-phosphocholine(in) + H(+)(in). It catalyses the reaction a 1-O-(1Z-alkenyl)-sn-glycero-3-phosphoethanolamine(out) + H(+)(out) = a 1-O-(1Z-alkenyl)-sn-glycero-3-phosphoethanolamine(in) + H(+)(in). It carries out the reaction 1-O-(1Z-hexadecenyl)-sn-glycero-3-phosphoethanolamine(out) + H(+)(out) = 1-O-(1Z-hexadecenyl)-sn-glycero-3-phosphoethanolamine(in) + H(+)(in). Its function is as follows. Plays a critical role in the phospholipid salvage pathway from lysosomes to the cytosol. Mediates the rate-limiting, proton-dependent, lysosomal efflux of lysophospholipids, which can then be reacylated by acyltransferases in the endoplasmic reticulum to form phospholipids. Selective for zwitterionic headgroups such as lysophosphatidylcholine (LPC) and lysophosphatidylethanolamine (LPE), can also transport lysophosphatidylglycerol (LPG), but not other anionic lysophospholipids, sphingosine, nor sphingomyelin. Transports lysophospholipids with saturated, monounsaturated, and polyunsaturated fatty acids, such as 1-hexadecanoyl-sn-glycero-3-phosphocholine, 1-(9Z-octadecenoyl)-sn-glycero-3-phosphocholine and 1-(4Z,7Z,10Z,13Z,16Z,19Z-docosahexaenoyl)-sn-glycero-3-phosphocholine, respectively. Can also transport lysoplasmalogen (LPC with a fatty alcohol) such as 1-(1Z-hexadecenyl)-sn-glycero-3-phosphocholine. Essential player in lysosomal homeostasis. Crucial for cell survival under conditions of nutrient limitation. May be involved in necrotic or autophagic cell death. In Rattus norvegicus (Rat), this protein is Protein spinster homolog 1 (Spns1).